Reading from the N-terminus, the 1075-residue chain is Atos homolog protein A (1075 aa).

The transactivation domain 1 (TAD1) stretch occupies residues 24–32 (ALLITEGRT). 3 disordered regions span residues 430 to 469 (FGSP…RQPA), 570 to 592 (YSPQ…PDSI), and 703 to 766 (LNKN…PHSV). A compositionally biased stretch (basic and acidic residues) spans 440-454 (DSREGKVREKSETRP). The span at 703–712 (LNKNKTNCSS) shows a compositional bias: polar residues. The segment covering 746–759 (DRLKTEQEAKRDSG) has biased composition (basic and acidic residues). The required for macropage invasion stretch occupies residues 878 to 935 (LLGNFEESVLNYRLDPLGIVDGFTAEVGASGTFCPTHLTLPVEVSFYSVSDDNAPSPY). A transactivation domain 2 (TAD2) region spans residues 962–970 (FNPNKTVVK).

This sequence belongs to the ATOS family.

It localises to the nucleus. In terms of biological role, transcription regulator that syncronizes transcriptional and translational programs to promote macrophage invasion of tissues. In Mus musculus (Mouse), this protein is Atos homolog protein A (Atosa).